A 284-amino-acid polypeptide reads, in one-letter code: GTP cyclohydrolase MptA (284 aa).

This sequence belongs to the GTP cyclohydrolase IV family. As to quaternary structure, homodimer. The cofactor is Fe(2+).

It catalyses the reaction GTP + H2O = 7,8-dihydroneopterin 2',3'-cyclic phosphate + formate + diphosphate + H(+). It functions in the pathway cofactor biosynthesis; 5,6,7,8-tetrahydromethanopterin biosynthesis. In terms of biological role, converts GTP to 7,8-dihydro-D-neopterin 2',3'-cyclic phosphate, the first intermediate in the biosynthesis of coenzyme methanopterin. The sequence is that of GTP cyclohydrolase MptA from Thermoplasma volcanium (strain ATCC 51530 / DSM 4299 / JCM 9571 / NBRC 15438 / GSS1).